The chain runs to 467 residues: Glutamate--tRNA ligase (467 aa).

The 'HIGH' region motif lies at 9-19; it reads PSPTGYLHIGG. The 'KMSKS' region signature appears at 237 to 241; the sequence is KLSKR. Residue Lys-240 coordinates ATP.

This sequence belongs to the class-I aminoacyl-tRNA synthetase family. Glutamate--tRNA ligase type 1 subfamily. Monomer.

It is found in the cytoplasm. It carries out the reaction tRNA(Glu) + L-glutamate + ATP = L-glutamyl-tRNA(Glu) + AMP + diphosphate. Functionally, catalyzes the attachment of glutamate to tRNA(Glu) in a two-step reaction: glutamate is first activated by ATP to form Glu-AMP and then transferred to the acceptor end of tRNA(Glu). The chain is Glutamate--tRNA ligase from Xanthomonas axonopodis pv. citri (strain 306).